The following is a 235-amino-acid chain: ATP synthase subunit a (235 aa).

The next 5 helical transmembrane spans lie at 17 to 37 (TTNI…LYGM), 76 to 96 (SFFA…GLIF), 113 to 133 (PVVT…AGVA), 179 to 201 (LLMS…PGLF), and 211 to 230 (VFIG…VYIS).

Belongs to the ATPase A chain family. F-type ATPases have 2 components, CF(1) - the catalytic core - and CF(0) - the membrane proton channel. CF(1) has five subunits: alpha(3), beta(3), gamma(1), delta(1), epsilon(1). CF(0) has three main subunits: a(1), b(2) and c(9-12). The alpha and beta chains form an alternating ring which encloses part of the gamma chain. CF(1) is attached to CF(0) by a central stalk formed by the gamma and epsilon chains, while a peripheral stalk is formed by the delta and b chains.

Its subcellular location is the cell membrane. In terms of biological role, key component of the proton channel; it plays a direct role in the translocation of protons across the membrane. This Limosilactobacillus reuteri subsp. reuteri (strain JCM 1112) (Lactobacillus reuteri) protein is ATP synthase subunit a.